The chain runs to 256 residues: Type III pantothenate kinase (256 aa).

ATP is bound at residue 6-13 (DVGNSHIY). Substrate is bound by residues Tyr-99 and 106-109 (GADR). Asp-108 acts as the Proton acceptor in catalysis. Residue Asp-129 coordinates K(+). Thr-132 provides a ligand contact to ATP. Position 184 (Thr-184) interacts with substrate.

The protein belongs to the type III pantothenate kinase family. Homodimer. It depends on NH4(+) as a cofactor. K(+) is required as a cofactor.

Its subcellular location is the cytoplasm. It carries out the reaction (R)-pantothenate + ATP = (R)-4'-phosphopantothenate + ADP + H(+). The protein operates within cofactor biosynthesis; coenzyme A biosynthesis; CoA from (R)-pantothenate: step 1/5. Catalyzes the phosphorylation of pantothenate (Pan), the first step in CoA biosynthesis. The protein is Type III pantothenate kinase of Legionella pneumophila (strain Corby).